The primary structure comprises 514 residues: 2,3-bisphosphoglycerate-independent phosphoglycerate mutase (514 aa).

2 residues coordinate Mn(2+): aspartate 14 and serine 64. Serine 64 acts as the Phosphoserine intermediate in catalysis. Substrate-binding positions include histidine 125, 155-156, arginine 187, arginine 193, 263-266, and lysine 336; these read RD and RADR. Residues aspartate 403, histidine 407, aspartate 444, histidine 445, and histidine 463 each coordinate Mn(2+).

This sequence belongs to the BPG-independent phosphoglycerate mutase family. In terms of assembly, monomer. The cofactor is Mn(2+).

It catalyses the reaction (2R)-2-phosphoglycerate = (2R)-3-phosphoglycerate. It functions in the pathway carbohydrate degradation; glycolysis; pyruvate from D-glyceraldehyde 3-phosphate: step 3/5. Its function is as follows. Catalyzes the interconversion of 2-phosphoglycerate and 3-phosphoglycerate. The protein is 2,3-bisphosphoglycerate-independent phosphoglycerate mutase of Shewanella sp. (strain ANA-3).